Here is a 434-residue protein sequence, read N- to C-terminus: Sulfide-quinone reductase (434 aa).

FAD is bound by residues 8 to 12 (GAGTG), 34 to 35 (SA), and 77 to 78 (SA). Catalysis depends on C160, which acts as the Cysteine persulfide intermediate. FAD-binding residues include I302 and G322. The active-site Cysteine persulfide intermediate is the C356. K391 serves as a coordination point for FAD.

The protein belongs to the SQRD family. As to quaternary structure, homodimer. FAD serves as cofactor.

It is found in the membrane. It catalyses the reaction n a quinone + n hydrogen sulfide + n H(+) = polysulfur(n-2) + n a quinol. Its function is as follows. Catalyzes the oxidation of hydrogen sulfide, with the help of a quinone. Consecutive reaction cycles lead to the accumulation of a polysulfide product on the active site Cys residues; these products are released when they exceed a critical length, typically as cyclooctasulfur. The sequence is that of Sulfide-quinone reductase from Acidithiobacillus ferrooxidans (strain ATCC 23270 / DSM 14882 / CIP 104768 / NCIMB 8455) (Ferrobacillus ferrooxidans (strain ATCC 23270)).